A 380-amino-acid polypeptide reads, in one-letter code: Lipid-A-disaccharide synthase (380 aa).

It belongs to the LpxB family.

The catalysed reaction is a lipid X + a UDP-2-N,3-O-bis[(3R)-3-hydroxyacyl]-alpha-D-glucosamine = a lipid A disaccharide + UDP + H(+). Its pathway is bacterial outer membrane biogenesis; LPS lipid A biosynthesis. In terms of biological role, condensation of UDP-2,3-diacylglucosamine and 2,3-diacylglucosamine-1-phosphate to form lipid A disaccharide, a precursor of lipid A, a phosphorylated glycolipid that anchors the lipopolysaccharide to the outer membrane of the cell. The sequence is that of Lipid-A-disaccharide synthase from Francisella philomiragia subsp. philomiragia (strain ATCC 25017 / CCUG 19701 / FSC 153 / O#319-036).